An 83-amino-acid polypeptide reads, in one-letter code: Three-finger toxin MALT0052C (83 aa).

The N-terminal stretch at 1-21 (MKTLLLTLVVVTIVCLDFGHT) is a signal peptide. Disulfide bonds link C24–C45, C38–C62, C64–C75, and C76–C81.

Belongs to the three-finger toxin family. Short-chain subfamily. Type I alpha-neurotoxin sub-subfamily. In terms of tissue distribution, expressed by the venom gland.

The protein resides in the secreted. In terms of biological role, binds to muscle nicotinic acetylcholine receptor (nAChR) and inhibit acetylcholine from binding to the receptor, thereby impairing neuromuscular transmission. This Micrurus altirostris (Uruguayan coral snake) protein is Three-finger toxin MALT0052C.